The sequence spans 467 residues: Glutamate--tRNA ligase 1 (467 aa).

Residues 8-18 (PSPTGHLHVGG) carry the 'HIGH' region motif. The 'KMSKS' region motif lies at 230–234 (PLSKR). Residue Lys-233 coordinates ATP.

The protein belongs to the class-I aminoacyl-tRNA synthetase family. Glutamate--tRNA ligase type 1 subfamily. Monomer.

It is found in the cytoplasm. The catalysed reaction is tRNA(Glu) + L-glutamate + ATP = L-glutamyl-tRNA(Glu) + AMP + diphosphate. Its function is as follows. Catalyzes the attachment of glutamate to tRNA(Glu) in a two-step reaction: glutamate is first activated by ATP to form Glu-AMP and then transferred to the acceptor end of tRNA(Glu). This Petrotoga mobilis (strain DSM 10674 / SJ95) protein is Glutamate--tRNA ligase 1.